We begin with the raw amino-acid sequence, 388 residues long: Chorismate synthase (388 aa).

NADP(+)-binding residues include R39 and R45. FMN contacts are provided by residues R130–S132, N251–A252, A296, K311–T315, and R337.

It belongs to the chorismate synthase family. Homotetramer. Requires FMNH2 as cofactor.

It catalyses the reaction 5-O-(1-carboxyvinyl)-3-phosphoshikimate = chorismate + phosphate. Its pathway is metabolic intermediate biosynthesis; chorismate biosynthesis; chorismate from D-erythrose 4-phosphate and phosphoenolpyruvate: step 7/7. Catalyzes the anti-1,4-elimination of the C-3 phosphate and the C-6 proR hydrogen from 5-enolpyruvylshikimate-3-phosphate (EPSP) to yield chorismate, which is the branch point compound that serves as the starting substrate for the three terminal pathways of aromatic amino acid biosynthesis. This reaction introduces a second double bond into the aromatic ring system. The sequence is that of Chorismate synthase from Streptococcus equi subsp. equi (strain 4047).